The chain runs to 283 residues: Formamidopyrimidine-DNA glycosylase (283 aa).

The Schiff-base intermediate with DNA role is filled by P2. The active-site Proton donor is E3. K58 acts as the Proton donor; for beta-elimination activity in catalysis. 3 residues coordinate DNA: H100, R119, and R162. The FPG-type zinc finger occupies 247–283; that stretch reads RVYGREGQPCVTPGCRGLVGRIVQSGRSSFHCPECQR. Catalysis depends on R273, which acts as the Proton donor; for delta-elimination activity.

The protein belongs to the FPG family. In terms of assembly, monomer. Requires Zn(2+) as cofactor.

It carries out the reaction Hydrolysis of DNA containing ring-opened 7-methylguanine residues, releasing 2,6-diamino-4-hydroxy-5-(N-methyl)formamidopyrimidine.. The catalysed reaction is 2'-deoxyribonucleotide-(2'-deoxyribose 5'-phosphate)-2'-deoxyribonucleotide-DNA = a 3'-end 2'-deoxyribonucleotide-(2,3-dehydro-2,3-deoxyribose 5'-phosphate)-DNA + a 5'-end 5'-phospho-2'-deoxyribonucleoside-DNA + H(+). Its function is as follows. Involved in base excision repair of DNA damaged by oxidation or by mutagenic agents. Acts as a DNA glycosylase that recognizes and removes damaged bases. Has a preference for oxidized purines, such as 7,8-dihydro-8-oxoguanine (8-oxoG). Has AP (apurinic/apyrimidinic) lyase activity and introduces nicks in the DNA strand. Cleaves the DNA backbone by beta-delta elimination to generate a single-strand break at the site of the removed base with both 3'- and 5'-phosphates. This is Formamidopyrimidine-DNA glycosylase from Cereibacter sphaeroides (strain ATCC 17025 / ATH 2.4.3) (Rhodobacter sphaeroides).